Here is a 1222-residue protein sequence, read N- to C-terminus: Deubiquitinating protein VCPIP1 (1222 aa).

The segment covering 1–21 has biased composition (pro residues); it reads MSQPPPPPPPLPPPPPPPEAP. The tract at residues 1–36 is disordered; the sequence is MSQPPPPPPPLPPPPPPPEAPQTPSSLASAAASGGL. Positions 25 to 36 are enriched in low complexity; it reads SSLASAAASGGL. The region spanning 208 to 361 is the OTU domain; it reads LIPVHVDGDG…RNHYIPLVGI (154 aa). The active site involves aspartate 216. Residue cysteine 219 is the Nucleophile of the active site. Residue histidine 354 is part of the active site. Lysine 408 is modified (N6-acetyllysine). Disordered stretches follow at residues 725 to 776, 989 to 1009, and 1024 to 1074; these read SVMQ…KEKK, EATT…LGSG, and AFQG…VFTA. 2 positions are modified to phosphoserine: serine 747 and serine 757. Positions 755-771 are enriched in low complexity; sequence PSSAPATPTKAPYSPTT. Position 763 is a phosphothreonine (threonine 763). A phosphoserine mark is found at serine 768, serine 994, and serine 998. Residues 1041–1050 show a composition bias toward basic and acidic residues; it reads LDPRARETSV. Positions 1057-1074 are enriched in polar residues; the sequence is GTDFSNSSTKTEPSVFTA. Serine 1077 carries the post-translational modification Phosphoserine. Disordered regions lie at residues 1113-1175 and 1188-1222; these read VSSI…TETT and ATRS…MDHS. Over residues 1143–1157 the composition is skewed to polar residues; that stretch reads VVSSSAKSGSLQTGL. Positions 1163–1175 are enriched in low complexity; sequence LTGGTENLNTETT. Serine 1198 bears the Phosphoserine mark. The span at 1200–1209 shows a compositional bias: acidic residues; sequence EELEEMDSQD. A Phosphoserine; by ATM modification is found at serine 1207. Positions 1210 to 1222 are enriched in polar residues; it reads AEMTNTTEPMDHS.

As to quaternary structure, binds VCP and the ternary complex containing STX5A, NSFL1C and VCP. Post-translationally, phosphorylated at Ser-1207 by ATM or ATR following induction of covalent DNA-protein cross-links (DPCs).

It is found in the nucleus. The protein resides in the cytoplasm. The protein localises to the endoplasmic reticulum. It localises to the golgi apparatus. Its subcellular location is the golgi stack. It catalyses the reaction Thiol-dependent hydrolysis of ester, thioester, amide, peptide and isopeptide bonds formed by the C-terminal Gly of ubiquitin (a 76-residue protein attached to proteins as an intracellular targeting signal).. In terms of biological role, deubiquitinating enzyme involved in DNA repair and reassembly of the Golgi apparatus and the endoplasmic reticulum following mitosis. Necessary for VCP-mediated reassembly of Golgi stacks after mitosis. Plays a role in VCP-mediated formation of transitional endoplasmic reticulum (tER). Mediates dissociation of the ternary complex containing STX5A, NSFL1C and VCP. Also involved in DNA repair following phosphorylation by ATM or ATR: acts by catalyzing deubiquitination of SPRTN, thereby promoting SPRTN recruitment to chromatin and subsequent proteolytic cleavage of covalent DNA-protein cross-links (DPCs). Hydrolyzes 'Lys-11'- and 'Lys-48'-linked polyubiquitin chains. Its function is as follows. (Microbial infection) Regulates the duration of C.botulinum neurotoxin type A (BoNT/A) intoxication by catalyzing deubiquitination of Botulinum neurotoxin A light chain (LC), thereby preventing LC degradation by the proteasome, and accelerating botulinum neurotoxin intoxication in patients. The chain is Deubiquitinating protein VCPIP1 from Homo sapiens (Human).